Reading from the N-terminus, the 123-residue chain is Large ribosomal subunit protein bL12 (123 aa).

It belongs to the bacterial ribosomal protein bL12 family. As to quaternary structure, homodimer. Part of the ribosomal stalk of the 50S ribosomal subunit. Forms a multimeric L10(L12)X complex, where L10 forms an elongated spine to which 2 to 4 L12 dimers bind in a sequential fashion. Binds GTP-bound translation factors.

Forms part of the ribosomal stalk which helps the ribosome interact with GTP-bound translation factors. Is thus essential for accurate translation. This Cytophaga hutchinsonii (strain ATCC 33406 / DSM 1761 / CIP 103989 / NBRC 15051 / NCIMB 9469 / D465) protein is Large ribosomal subunit protein bL12.